The chain runs to 154 residues: MATSVELSSYRDQHFKGSRSEQERSLKDSCTLYVGNLSFYTTEEQIHELFSRCGDVRLIVMGLDKYKKTPCGFCFVEYYIRSEAESAMRFVNGTRLDDRLIRVDWDAGFIEGRQYGRGKTGGQVRDEYRTDYDAGRGGYGKLLSLKIAPNTDNR.

MRNA-binding positions include tyrosine 10, tyrosine 33, 102–106 (RVDWD), 113–117 (RQYGR), and 123–124 (QV). The RRM domain occupies 30–108 (CTLYVGNLSF…RLIRVDWDAG (79 aa)).

The protein belongs to the RRM NCBP2 family. In terms of assembly, component of the nuclear cap-binding complex (CBC), a heterodimer composed of Cbp80 and Cbp20 that interacts with m7GpppG-capped RNA. Interacts with Ars2.

The protein localises to the nucleus. In terms of biological role, component of the cap-binding complex (CBC), which binds co-transcriptionally to the 5' cap of pre-mRNAs and is involved in various processes such as pre-mRNA splicing and RNA-mediated gene silencing (RNAi). The CBC complex is involved in miRNA-mediated RNA interference via its interaction with Ars2 and is required for primary microRNAs (miRNAs) processing. Also involved in innate immunity via the short interfering RNAs (siRNAs) processing machinery by restricting the viral RNA production. In the CBC complex, Cbp20 recognizes and binds capped RNAs (m7GpppG-capped RNA) but requires Cbp80 to stabilize the movement of its N-terminal loop and lock the CBC into a high affinity cap-binding state with the cap structure. The sequence is that of Nuclear cap-binding protein subunit 2 (Cbp20) from Drosophila persimilis (Fruit fly).